A 169-amino-acid polypeptide reads, in one-letter code: Peptide deformylase (169 aa).

Cys-91 and His-133 together coordinate Fe cation. Glu-134 is a catalytic residue. His-137 is a Fe cation binding site.

The protein belongs to the polypeptide deformylase family. Fe(2+) is required as a cofactor.

It catalyses the reaction N-terminal N-formyl-L-methionyl-[peptide] + H2O = N-terminal L-methionyl-[peptide] + formate. Functionally, removes the formyl group from the N-terminal Met of newly synthesized proteins. Requires at least a dipeptide for an efficient rate of reaction. N-terminal L-methionine is a prerequisite for activity but the enzyme has broad specificity at other positions. This Citrobacter koseri (strain ATCC BAA-895 / CDC 4225-83 / SGSC4696) protein is Peptide deformylase.